Reading from the N-terminus, the 406-residue chain is Calsequestrin-1 (406 aa).

The signal sequence occupies residues 1–34 (MRATDRMGARAVSKLRLALLFVLVLGTPRSGVQG). Phosphotyrosine is present on Tyr43. Position 81 is a phosphoserine (Ser81). Phosphothreonine is present on Thr124. Ser216 bears the Phosphoserine mark. Asn350 carries an N-linked (GlcNAc...) asparagine glycan. The segment at 382–406 (EGEINTEDDDDDDDDDDDDDDDDDD) is disordered.

Belongs to the calsequestrin family. Monomer; increases in response to a depletion of intracellular calcium. Homodimer. Homotetramer and homopolymer. Can form linear homooligomers. Ca(2+) ions promote oligomerization. Interacts (via C-terminal end and preferentially with the monomeric form) with STIM1; this interaction increases in response to a depletion of intracellular calcium, decreases both STIM1 aggregation and clustering, interaction of STIM1 with ORAI1 and store-operated Ca(2+) entry (SOCE) activity. Interacts with ASPH and TRDN. N-glycosylated. As to expression, detected in skeletal muscle and in smooth muscle from vas deferens, aorta and stomach (at protein level).

It localises to the endoplasmic reticulum. Its subcellular location is the sarcoplasmic reticulum. It is found in the sarcoplasmic reticulum lumen. The protein localises to the sarcoplasmic reticulum membrane. The protein resides in the mitochondrion matrix. Calsequestrin is a high-capacity, moderate affinity, calcium-binding protein and thus acts as an internal calcium store in muscle. Calcium ions are bound by clusters of acidic residues at the protein surface, often at the interface between subunits. Can bind around 80 Ca(2+) ions. Regulates the release of lumenal Ca(2+) via the calcium release channel RYR1; this plays an important role in triggering muscle contraction. Negatively regulates store-operated Ca(2+) entry (SOCE) activity. The chain is Calsequestrin-1 (Casq1) from Rattus norvegicus (Rat).